Consider the following 551-residue polypeptide: Arylsulfatase (551 aa).

Residues 1–20 (MKSAPFLFLLGLLGLVTAQT) form the signal peptide. A Blocked amino end (Gln) modification is found at Q21. Residues D60, H61, and C100 each contribute to the Ca(2+) site. The active-site Nucleophile is the C100. A 3-oxoalanine (Cys) modification is found at C100. H158 is an active-site residue. N-linked (GlcNAc...) asparagine glycans are attached at residues N164, N213, and N296. The Ca(2+) site is built by D308 and H309.

Belongs to the sulfatase family. Requires Ca(2+) as cofactor. In terms of processing, the conversion to 3-oxoalanine (also known as C-formylglycine, FGly), of a serine or cysteine residue in prokaryotes and of a cysteine residue in eukaryotes, is critical for catalytic activity.

It is found in the cytoplasm. It localises to the secreted. Its subcellular location is the extracellular space. The protein localises to the extracellular matrix. The enzyme catalyses an aryl sulfate + H2O = a phenol + sulfate + H(+). Functionally, may be a structural component of the extracellular matrices involved in cell movement during morphogenesis. The sequence is that of Arylsulfatase from Hemicentrotus pulcherrimus (Sea urchin).